Here is a 626-residue protein sequence, read N- to C-terminus: MESARLVGDYALGPRIGSGSFAVVWLAKHRSSGLEVAVKEIDKKLLSPKVRDNLLKEISILSTIDHPNIIRFYEAIETGDRIFLVLEYCSGGDLAGYINRHGKVPEAVAKHFMRQLALGLQVLQEKHFIHRDLKPQNLLLSSKEVTPLLKIGDFGFARSLTPESMAETFCGSPLYMAPEIIRNQKYDAKADLWSAGAILFQLVTGKPPFDGNNHIQLFHNIVRDTELKFPEDTRNEIHPDCVDLCRSLLRRNPIERLTFREFFNHMFLREPRQIPDVEHSGFSTCTGKSLLPSAQPSTSTNRFKSSAENVHKHGSSSSASNSQISMPHTSFEKTRKDTEGQCSSNQSGVVDSLELIEREYVLVNRPSASLEGSSDCFDTSLQDSGFPNILPRNEKVSSSSLEAQKPLSDVSGPRPASVSYLLTEVQRLTIVHPPTKLQLLHQYAQALTELASEMGNTGQVKESFAVTLVVLAVWRKALEICDSWMMSVGENEVNPDPTTAPETSIPDLNSPAPAKTWVTQEFVTALNQAENLSTQLNETSAATHMPDAMETIYERALAYGKSGGAEEYLSNKESAATLYKKAILLLSFIIEEAVTLSLNPSFSLTPDDKKRILYYISNLQHRRSHL.

A Protein kinase domain is found at 10 to 268 (YALGPRIGSG…FREFFNHMFL (259 aa)). Residues 16-24 (IGSGSFAVV) and Lys-39 contribute to the ATP site. Asp-132 (proton acceptor) is an active-site residue. Positions 288–308 (KSLLPSAQPSTSTNRFKSSAE) are enriched in polar residues. A disordered region spans residues 288–347 (KSLLPSAQPSTSTNRFKSSAENVHKHGSSSSASNSQISMPHTSFEKTRKDTEGQCSSNQS). A compositionally biased stretch (low complexity) spans 315-325 (SSSSASNSQIS). Residues 330 to 339 (SFEKTRKDTE) show a composition bias toward basic and acidic residues. Residues 360 to 363 (YVLV) carry the AIM (Atg8-family-interacting motif) motif.

The protein belongs to the protein kinase superfamily. Ser/Thr protein kinase family. As to quaternary structure, interacts with ATG13A. Interacts with ATG8E. Binds to ATG8E on autophagic vesicles. Phosphorylated during nutrient starvation. Dephosphorylated in nutrient-rich conditions.

It is found in the cytoplasmic vesicle. The protein resides in the autophagosome. Serine/threonine protein kinase involved in autophagy in a nutritional condition-dependent manner. The ATG1-ATG13 protein kinase complex regulates downstream events required for autophagosome enclosure and/or vacuolar delivery. Becomes a target of autophagy under nutrient starvation. Connects autophagy to plant nutritional status. This Arabidopsis thaliana (Mouse-ear cress) protein is Serine/threonine-protein kinase ATG1a.